Reading from the N-terminus, the 185-residue chain is Large ribosomal subunit protein uL5 (185 aa).

It belongs to the universal ribosomal protein uL5 family. Part of the 50S ribosomal subunit; part of the 5S rRNA/L5/L18/L25 subcomplex. Contacts the 5S rRNA and the P site tRNA. Forms a bridge to the 30S subunit in the 70S ribosome.

Its function is as follows. This is one of the proteins that bind and probably mediate the attachment of the 5S RNA into the large ribosomal subunit, where it forms part of the central protuberance. In the 70S ribosome it contacts protein S13 of the 30S subunit (bridge B1b), connecting the 2 subunits; this bridge is implicated in subunit movement. Contacts the P site tRNA; the 5S rRNA and some of its associated proteins might help stabilize positioning of ribosome-bound tRNAs. This Streptomyces avermitilis (strain ATCC 31267 / DSM 46492 / JCM 5070 / NBRC 14893 / NCIMB 12804 / NRRL 8165 / MA-4680) protein is Large ribosomal subunit protein uL5.